The chain runs to 172 residues: RNA pyrophosphohydrolase (172 aa).

A Nudix hydrolase domain is found at 8–153 (QHRPNVGVVL…KRGVYEAVVA (146 aa)). Positions 43-64 (GGVDEGEDLEVAARRELAEETG) match the Nudix box motif.

This sequence belongs to the Nudix hydrolase family. RppH subfamily. The cofactor is a divalent metal cation.

Accelerates the degradation of transcripts by removing pyrophosphate from the 5'-end of triphosphorylated RNA, leading to a more labile monophosphorylated state that can stimulate subsequent ribonuclease cleavage. This chain is RNA pyrophosphohydrolase, found in Caulobacter vibrioides (strain ATCC 19089 / CIP 103742 / CB 15) (Caulobacter crescentus).